The following is a 235-amino-acid chain: Putative HAD-hydrolase YfnB (235 aa).

Asp10 (nucleophile) is an active-site residue.

The protein belongs to the HAD-like hydrolase superfamily. YjjG family.

The chain is Putative HAD-hydrolase YfnB (yfnB) from Bacillus subtilis (strain 168).